A 382-amino-acid chain; its full sequence is B3 domain-containing protein Os03g0622100 (382 aa).

A DNA-binding region (TF-B3 1) is located at residues 29 to 123; sequence CKHFLTYMVG…SFDVLIFDPS (95 aa). 2 stretches are compositionally biased toward basic and acidic residues: residues 136–158 and 193–202; these read RGFGREEKSAGAEGGGRDGDKNG and QDHREEKKEG. The tract at residues 136–222 is disordered; that stretch reads RGFGREEKSA…EDVDKDGEDR (87 aa). Positions 203–218 are enriched in acidic residues; sequence DDEDEDEDEDEDVDKD. Positions 261-363 form a DNA-binding region, TF-B3 2; that stretch reads KVIHASHLLS…AGDRLRRRPR (103 aa).

The protein localises to the nucleus. The chain is B3 domain-containing protein Os03g0622100 from Oryza sativa subsp. japonica (Rice).